Reading from the N-terminus, the 837-residue chain is Periplasmic nitrate reductase (837 aa).

A signal peptide (tat-type signal) is located at residues methionine 1 to alanine 33. The region spanning leucine 44–aspartate 100 is the 4Fe-4S Mo/W bis-MGD-type domain. [4Fe-4S] cluster is bound by residues cysteine 51, cysteine 54, cysteine 58, and cysteine 86. Residues lysine 88, glutamine 155, asparagine 180, cysteine 184, tryptophan 217 to methionine 224, serine 248 to histidine 252, glutamine 267 to aspartate 269, methionine 378, glutamine 382, asparagine 488, serine 514 to aspartate 515, lysine 537, aspartate 564, and threonine 724 to serine 733 contribute to the Mo-bis(molybdopterin guanine dinucleotide) site. Tryptophan 800 lines the substrate pocket. 2 residues coordinate Mo-bis(molybdopterin guanine dinucleotide): asparagine 808 and lysine 825.

This sequence belongs to the prokaryotic molybdopterin-containing oxidoreductase family. NasA/NapA/NarB subfamily. In terms of assembly, component of the periplasmic nitrate reductase NapAB complex composed of NapA and NapB. [4Fe-4S] cluster serves as cofactor. The cofactor is Mo-bis(molybdopterin guanine dinucleotide). In terms of processing, predicted to be exported by the Tat system. The position of the signal peptide cleavage has not been experimentally proven.

The protein localises to the periplasm. It catalyses the reaction 2 Fe(II)-[cytochrome] + nitrate + 2 H(+) = 2 Fe(III)-[cytochrome] + nitrite + H2O. Functionally, catalytic subunit of the periplasmic nitrate reductase complex NapAB. Receives electrons from NapB and catalyzes the reduction of nitrate to nitrite. The polypeptide is Periplasmic nitrate reductase (Rhodopseudomonas palustris (strain BisB18)).